A 709-amino-acid chain; its full sequence is MALDVLTNLNQVRNIGIMAHIDAGKTTTTERILFYTGKNYKIGETHEGASTMDFMAQEKERGITIQSAATTCFWNRQTHDPDEKFQINIIDTPGHVDFTAEVERSLRVLDGAVAVFDGKEGVEPQSETVWRQADKYGVPRICFINKMDKLGADFYYSVSTIKEKLGATPLVVQLPIGAENDFSGVVDLIRMKAYVWNDIKDDQGAHYDTVEIPDDLKERAEQYRSELLDQVAETDEELLEKYLENGDLSEQEIRGAIRQLTIAREAYPVLCGSAFKDKGVQPMLDAVVDYLPSPEDVPSIVGFDPSDESVEIDRKPTMDDPFSALVFKISTHPFYGKLVFVRVYSGSVKPGDNVLDSTKGKKERVGKIFQMHADKENPVDAAEAGNIYTFVGLKNVTTGDTLCDEKHPISLESMTFPDPVIEVAVEPKTKADQEKMSLALAKLSDEDPTFQVKTDEESGQTLISGMGELQLDIIVDRMRREFKVECNVGKPQVAYRETIRKAVMNQEYTHKKQTGGSGQFAKVLMNFEPLDTENGEVYEFVNEVTGGHITKEFIPSIDAGVQEAMESGILAGFPVVGVKATVTDGQVHDVDSSEMAFKIAGSMCFKEAAPKAKPVILEPIMAVEVRTPEEYMGDVMGDLNSRRGSIQSMNDATGVKVIDAKVPLSEMFGYIGDLRSKTQGRAMFTMQMDSYAEVPKAVADEIIKAQRGE.

Residues 10–295 (NQVRNIGIMA…AVVDYLPSPE (286 aa)) enclose the tr-type G domain. GTP contacts are provided by residues 19-26 (AHIDAGKT), 91-95 (DTPGH), and 145-148 (NKMD).

The protein belongs to the TRAFAC class translation factor GTPase superfamily. Classic translation factor GTPase family. EF-G/EF-2 subfamily.

The protein resides in the cytoplasm. In terms of biological role, catalyzes the GTP-dependent ribosomal translocation step during translation elongation. During this step, the ribosome changes from the pre-translocational (PRE) to the post-translocational (POST) state as the newly formed A-site-bound peptidyl-tRNA and P-site-bound deacylated tRNA move to the P and E sites, respectively. Catalyzes the coordinated movement of the two tRNA molecules, the mRNA and conformational changes in the ribosome. In Bifidobacterium animalis subsp. lactis (strain AD011), this protein is Elongation factor G.